A 510-amino-acid chain; its full sequence is MTTSIIERIDAWAEKTPDFPCYEYAGTRLSYKELKRQSDAFGSFLLKNLNTDKEKPIIVYGHMSPLMLVAFLGSIKSGRAYVPVDVSMPVERIEQIKKAADPSLFICTEELPSNLTITGCPVLTQDQLMDALEKHFGEVPDKEACVKNDDNYYIIYTSGSTGNPKGVQISQNNLVSFSNWILQDFSLSQGLRFLNQAPFSFDLSVMDLYPSLLSGGTLVPLDKTITANMKDLYREIPAQNLDVWVSTPSFADLCLLDDNFNQENNPGLIRFLFCGEVLAKKTASELLNRFPDAVIYNTYGPTEATVAVTQVKVTREVIDAYPSLPLGVIKPDMRLHIVDQETGEVLPEGEKGEIVLIGASVSKGYLNEPEKTDQVFFDYKGYQAYRTGDSGIIKDGYLFFQGRLDFQIKLHGYRIELEDIENNLKKVSYIQNCAIIPKMKDEKVDMLVAQVIPTNHDFEKEYQLSAAIKNELKEFMPAYMIPRKWIYKTEFPLTMNGKIDRKALNSEVNK.

157 to 158 (TS) contacts ATP. Asp-202 is a binding site for D-alanine. 297-302 (NTYGPT) contacts ATP. Val-306 is a D-alanine binding site. 2 residues coordinate ATP: Asp-389 and Lys-498. Lys-498 serves as a coordination point for D-alanine.

This sequence belongs to the ATP-dependent AMP-binding enzyme family. DltA subfamily.

It localises to the cytoplasm. The enzyme catalyses holo-[D-alanyl-carrier protein] + D-alanine + ATP = D-alanyl-[D-alanyl-carrier protein] + AMP + diphosphate. It participates in cell wall biogenesis; lipoteichoic acid biosynthesis. Its function is as follows. Catalyzes the first step in the D-alanylation of lipoteichoic acid (LTA), the activation of D-alanine and its transfer onto the D-alanyl carrier protein (Dcp) DltC. In an ATP-dependent two-step reaction, forms a high energy D-alanyl-AMP intermediate, followed by transfer of the D-alanyl residue as a thiol ester to the phosphopantheinyl prosthetic group of the Dcp. D-alanylation of LTA plays an important role in modulating the properties of the cell wall in Gram-positive bacteria, influencing the net charge of the cell wall. The chain is D-alanine--D-alanyl carrier protein ligase from Listeria monocytogenes serotype 4b (strain F2365).